We begin with the raw amino-acid sequence, 70 residues long: Protein SlyX homolog (70 aa).

Belongs to the SlyX family.

The chain is Protein SlyX homolog from Pseudoalteromonas atlantica (strain T6c / ATCC BAA-1087).